Here is a 246-residue protein sequence, read N- to C-terminus: 2-deoxyglucose-6-phosphate phosphatase 2 (246 aa).

The Nucleophile role is filled by Asp-83. Position 83 (Asp-83) interacts with Mg(2+). Substrate is bound by residues Asp-83, Glu-92, and 146–149 (DVKN). Residue Asp-183 participates in Mg(2+) binding.

It belongs to the HAD-like hydrolase superfamily. DOG/GPP family. The cofactor is Mg(2+).

It carries out the reaction 2-deoxy-D-glucose 6-phosphate + H2O = 2-deoxy-D-glucose + phosphate. Its function is as follows. Phosphatase that is active on 2-deoxy-D-glucose 6-phosphate (2-DOG-6P), but not very active on fructose-1-P. This Saccharomyces cerevisiae (strain ATCC 204508 / S288c) (Baker's yeast) protein is 2-deoxyglucose-6-phosphate phosphatase 2.